Consider the following 247-residue polypeptide: Large ribosomal subunit protein uL30 (247 aa).

Met1 is subject to N-acetylmethionine. 4 repeat units span residues 7–17 (KKKVPAVPETL), 18–29 (KKKRRNFAELKI), 30–41 (KRLRKKFAQKML), and 42–53 (RKARRKLIYEKA). The tract at residues 7–53 (KKKVPAVPETLKKKRRNFAELKIKRLRKKFAQKMLRKARRKLIYEKA) is 4 X 12 AA tandem repeats. Thr16 is subject to Phosphothreonine. Lys123 is subject to N6-acetyllysine. Lys126 is modified (N6-succinyllysine). The residue at position 138 (Tyr138) is a Phosphotyrosine.

It belongs to the universal ribosomal protein uL30 family. As to quaternary structure, component of the large ribosomal subunit. Homodimer. Interacts with DHX33.

It localises to the cytoplasm. Its function is as follows. Component of the large ribosomal subunit. The ribosome is a large ribonucleoprotein complex responsible for the synthesis of proteins in the cell. Binds to G-rich structures in 28S rRNA and in mRNAs. Plays a regulatory role in the translation apparatus; inhibits cell-free translation of mRNAs. This chain is Large ribosomal subunit protein uL30 (RPL7), found in Macaca fascicularis (Crab-eating macaque).